Consider the following 327-residue polypeptide: Glycerol-3-phosphate dehydrogenase [NAD(P)+] (327 aa).

Residues F13, R34, and K107 each coordinate NADPH. Sn-glycerol 3-phosphate-binding residues include K107 and G135. A139 serves as a coordination point for NADPH. Residues K190, D243, S253, R254, and N255 each coordinate sn-glycerol 3-phosphate. The active-site Proton acceptor is K190. R254 is a binding site for NADPH. The NADPH site is built by V276 and E277.

Belongs to the NAD-dependent glycerol-3-phosphate dehydrogenase family.

The protein localises to the cytoplasm. It carries out the reaction sn-glycerol 3-phosphate + NAD(+) = dihydroxyacetone phosphate + NADH + H(+). The enzyme catalyses sn-glycerol 3-phosphate + NADP(+) = dihydroxyacetone phosphate + NADPH + H(+). It participates in membrane lipid metabolism; glycerophospholipid metabolism. Functionally, catalyzes the reduction of the glycolytic intermediate dihydroxyacetone phosphate (DHAP) to sn-glycerol 3-phosphate (G3P), the key precursor for phospholipid synthesis. The protein is Glycerol-3-phosphate dehydrogenase [NAD(P)+] of Rhizobium johnstonii (strain DSM 114642 / LMG 32736 / 3841) (Rhizobium leguminosarum bv. viciae).